The sequence spans 499 residues: Maturase K (499 aa).

It belongs to the intron maturase 2 family. MatK subfamily.

The protein resides in the plastid. It is found in the chloroplast. Usually encoded in the trnK tRNA gene intron. Probably assists in splicing its own and other chloroplast group II introns. This is Maturase K from Neltuma juliflora (Mesquite).